Reading from the N-terminus, the 241-residue chain is Adenosine 5'-phosphosulfate reductase (241 aa).

Residues cysteine 122, cysteine 123, cysteine 205, and cysteine 208 each coordinate [4Fe-4S] cluster. The active-site Nucleophile; cysteine thiosulfonate intermediate is cysteine 231.

The protein belongs to the PAPS reductase family. CysH subfamily. [4Fe-4S] cluster serves as cofactor.

The protein localises to the cytoplasm. It catalyses the reaction [thioredoxin]-disulfide + sulfite + AMP + 2 H(+) = adenosine 5'-phosphosulfate + [thioredoxin]-dithiol. Its pathway is sulfur metabolism; hydrogen sulfide biosynthesis; sulfite from sulfate. Its function is as follows. Catalyzes the formation of sulfite from adenosine 5'-phosphosulfate (APS) using thioredoxin as an electron donor. The polypeptide is Adenosine 5'-phosphosulfate reductase (Shouchella clausii (strain KSM-K16) (Alkalihalobacillus clausii)).